Consider the following 616-residue polypeptide: Heme A synthase-mitochondrial ferredoxin fusion protein (616 aa).

The transit peptide at 1–45 directs the protein to the mitochondrion; sequence MNISRSSGLMRQFLLQPLRKGCDISCLGRSSWRMSRSFSGSSVLN. The interval 45–465 is heme a synthase cox15-like; the sequence is NEINLSRTKN…AALSLAQRLH (421 aa). Topologically, residues 46–97 are mitochondrial matrix; the sequence is EINLSRTKNLFLNDCKFNKNSFEKFFARRLSNSVAPTPGGILQETEKIPSKK. Residues 98–118 form a helical membrane-spanning segment; the sequence is VAFWLLGSSALVLAIVVVGGI. Topologically, residues 119–182 are mitochondrial intermembrane; the sequence is TRLTESGLSI…NIFFWEWFHR (64 aa). Residue His181 coordinates heme o. A helical transmembrane segment spans residues 183–203; the sequence is VLGRGIGLTILLPSIYMIVTK. The Mitochondrial matrix segment spans residues 204-212; it reads RASPWLSKR. The chain crosses the membrane as a helical span at residues 213–233; it reads LIGLTGLVGLQGVIGWWMVKS. Topologically, residues 234–254 are mitochondrial intermembrane; sequence GLSEELFSDGSHPRVSHYRLA. Residues 255-275 traverse the membrane as a helical segment; the sequence is THLAAAVALYIGLVWTGHGIL. His256 is a binding site for heme o. At 276-311 the chain is on the mitochondrial matrix side; sequence QRHAFLKSMKSGSTSQLTSMVSSVQKMKGFRTSVNS. The chain crosses the membrane as a helical span at residues 312–332; it reads FVGLVLITLLSGAFVAGLDAG. The Mitochondrial intermembrane portion of the chain corresponds to 333-380; that stretch reads MIYCTFPEMGEGRLAPSKSELFDQRFCRKDDKSDLIWRNMIDNPSLVQ. Residues 381–401 form a helical membrane-spanning segment; that stretch reads LEHRILAITTFVAACGLFIFS. Residue His383 participates in heme b binding. The Mitochondrial matrix portion of the chain corresponds to 402 to 417; sequence RAKRNILPKKIKTSIN. A helical transmembrane segment spans residues 418–438; that stretch reads VVTGVVTAQATLGIMTLIYVV. A topological domain (mitochondrial intermembrane) is located at residue Pro439. Residues 440-460 traverse the membrane as a helical segment; it reads VPLAALHQAGSLVTLTAALSL. A heme b-binding site is contributed by His446. Residues 461 to 616 are Mitochondrial matrix-facing; that stretch reads AQRLHPEYAL…RNIRLERPKA (156 aa). Residues 502–606 enclose the 2Fe-2S ferredoxin-type domain; sequence FRPSFHSEIK…GIRVRIPAQT (105 aa). Residues 516 to 616 form a mitochondrial ferredoxin yah1-like region; it reads GTGIKVFFVT…RNIRLERPKA (101 aa). 4 residues coordinate [2Fe-2S] cluster: Cys541, Cys547, Cys550, and Cys587.

The protein in the N-terminal section; belongs to the COX15/CtaA family. Type 2 subfamily. In the C-terminal section; belongs to the adrenodoxin/putidaredoxin family. As to quaternary structure, homodimer. The cofactor is heme b. [2Fe-2S] cluster is required as a cofactor. In terms of processing, the etp1 preprotein is cleaved into 2 chains after imort into mitochondria. The N-terminal chain containing a heme A synthase cox15-like domain etp1(cd) is a subunit of the membrane-embedded cytochrome c oxidase complex and functions in the respiratory chain. The C-terminal chain containing a ferredoxin yah1-like domain etp1(fd) is released and serves in the matrix as electron transfer protein.

The protein resides in the mitochondrion inner membrane. Its subcellular location is the mitochondrion matrix. The enzyme catalyses Fe(II)-heme o + 2 A + H2O = Fe(II)-heme a + 2 AH2. It participates in porphyrin-containing compound metabolism; heme A biosynthesis; heme A from heme O: step 1/1. In terms of biological role, catalyzes the second reaction in the biosynthesis of heme A, a prosthetic group of mitochondrial cytochrome c oxidase (CcO). Heme A is synthesized from heme B by two sequential enzymatic reactions catalyzed by heme O synthase (HOS) and heme A synthase (HAS). HAS catalyzes the conversion of heme O to heme A by two successive hydroxylations of the methyl group at C8, in a reaction that involves matrix ferredoxin and ferredoxin reductase. The first hydroxylation forms heme I, the second hydroxylation results in an unstable dihydroxymethyl group, which spontaneously dehydrates, resulting in the formyl group of heme A. Functionally, iron-sulfur protein that transfers electrons in a wide variety of metabolic reactions. Involved in heme A biosynthesis and in iron-sulfur cluster assembly. Transfers electrons from adrenodoxin reductase arh1 to heme A synthase etp1(cd), a heme protein that catalyzes the conversion of heme O to heme A. Required for the de novo synthesis of Fe-S clusters on iron sulfur cluster assembly protein isu1. Interact in its reduced state with isu1 to productively deliver electrons for Fe-S cluster synthesis. Essential for coenzyme Q biosynthesis. May transfer the electrons required for the hydroxylation reaction performed by coq6. The polypeptide is Heme A synthase-mitochondrial ferredoxin fusion protein (Schizosaccharomyces pombe (strain 972 / ATCC 24843) (Fission yeast)).